The sequence spans 426 residues: Glutamate-1-semialdehyde 2,1-aminomutase (426 aa).

An N6-(pyridoxal phosphate)lysine modification is found at K265.

The protein belongs to the class-III pyridoxal-phosphate-dependent aminotransferase family. HemL subfamily. In terms of assembly, homodimer. Pyridoxal 5'-phosphate is required as a cofactor.

The protein resides in the cytoplasm. The catalysed reaction is (S)-4-amino-5-oxopentanoate = 5-aminolevulinate. It functions in the pathway porphyrin-containing compound metabolism; protoporphyrin-IX biosynthesis; 5-aminolevulinate from L-glutamyl-tRNA(Glu): step 2/2. This is Glutamate-1-semialdehyde 2,1-aminomutase from Escherichia coli (strain SMS-3-5 / SECEC).